The sequence spans 165 residues: 5-formyltetrahydrofolate cyclo-ligase (165 aa).

4-8 contacts ATP; sequence KNSLR. Residues Ile-51 and Glu-56 each coordinate substrate. 116–124 provides a ligand contact to ATP; it reads RIGFGKGYY. Asp-125 is a Mg(2+) binding site. ATP-binding residues include Arg-126 and Trp-154. Asp-155 contributes to the Mg(2+) binding site.

It belongs to the 5-formyltetrahydrofolate cyclo-ligase family. As to quaternary structure, monomer or homodimer. Mg(2+) serves as cofactor.

The protein localises to the cytoplasm. The catalysed reaction is (6S)-5-formyl-5,6,7,8-tetrahydrofolate + ATP = (6R)-5,10-methenyltetrahydrofolate + ADP + phosphate. Functionally, involved in folate metabolism. Catalyzes the irreversible conversion of 5-formyltetrahydrofolate (5-FTHF) to yield 5,10-methenyltetrahydrofolate. In Mycoplasma genitalium (strain ATCC 33530 / DSM 19775 / NCTC 10195 / G37) (Mycoplasmoides genitalium), this protein is 5-formyltetrahydrofolate cyclo-ligase.